We begin with the raw amino-acid sequence, 563 residues long: Eukaryotic translation initiation factor 3 subunit D-1 (563 aa).

The disordered stretch occupies residues 98–136; sequence VQKPPHQRGRFRNMRGRGGRGRNPRGGLNNHHHHGMTTL. The span at 100 to 120 shows a compositional bias: basic residues; that stretch reads KPPHQRGRFRNMRGRGGRGRN. The RNA gate stretch occupies residues 291-305; sequence EFDLLTVNESSVEPP.

It belongs to the eIF-3 subunit D family. Component of the eukaryotic translation initiation factor 3 (eIF-3) complex. The eIF-3 complex interacts with pix.

It is found in the cytoplasm. Its function is as follows. mRNA cap-binding component of the eukaryotic translation initiation factor 3 (eIF-3) complex, which is involved in protein synthesis of a specialized repertoire of mRNAs and, together with other initiation factors, stimulates binding of mRNA and methionyl-tRNAi to the 40S ribosome. The eIF-3 complex specifically targets and initiates translation of a subset of mRNAs involved in cell proliferation. In the eIF-3 complex, eif3d specifically recognizes and binds the 7-methylguanosine cap of a subset of mRNAs. This chain is Eukaryotic translation initiation factor 3 subunit D-1, found in Drosophila pseudoobscura pseudoobscura (Fruit fly).